Consider the following 665-residue polypeptide: ATPase WRNIP1 (665 aa).

The UBZ4-type zinc-finger motif lies at 17-44 (QVQCPVCQQMMPAAHINSHLDRCLLLHP). Residues cysteine 20, cysteine 23, histidine 31, histidine 35, and cysteine 39 each coordinate Zn(2+). Residues 48-190 (AEPAAGSHRA…DGEDDPGHWD (143 aa)) are disordered. Phosphoserine occurs at positions 65 and 75. Over residues 76–89 (ESSALKQPATPTAA) the composition is skewed to polar residues. A Glycyl lysine isopeptide (Lys-Gly) (interchain with G-Cter in ubiquitin) cross-link involves residue lysine 81. Threonine 85 bears the Phosphothreonine mark. A phosphoserine mark is found at serine 91 and serine 92. A compositionally biased stretch (acidic residues) spans 92–104 (SEGEGEEGDDGGE). The residue at position 116 (threonine 116) is a Phosphothreonine. The segment covering 130 to 155 (RSSSPGRKGSGKRPAAAAAAGSASPR) has biased composition (low complexity). Residue serine 139 is modified to Phosphoserine. A Glycyl lysine isopeptide (Lys-Gly) (interchain with G-Cter in ubiquitin) cross-link involves residue lysine 141. Position 153 is a phosphoserine (serine 153). The segment covering 159–184 (EAEAQEEEEAVGDGDGDGDADADGED) has biased composition (acidic residues). A Glycyl lysine isopeptide (Lys-Gly) (interchain with G-Cter in ubiquitin) cross-link involves residue lysine 225. Residue 270-276 (PGCGKTT) participates in ATP binding. Residues lysine 301, lysine 310, lysine 316, lysine 322, and lysine 335 each participate in a glycyl lysine isopeptide (Lys-Gly) (interchain with G-Cter in ubiquitin) cross-link. A Glycyl lysine isopeptide (Lys-Gly) (interchain with G-Cter in SUMO2); alternate cross-link involves residue lysine 482. A Glycyl lysine isopeptide (Lys-Gly) (interchain with G-Cter in ubiquitin); alternate cross-link involves residue lysine 482. Tyrosine 534 and tyrosine 562 each carry phosphotyrosine. A Glycyl lysine isopeptide (Lys-Gly) (interchain with G-Cter in ubiquitin) cross-link involves residue lysine 627. A Glycyl lysine isopeptide (Lys-Gly) (interchain with G-Cter in ubiquitin); alternate cross-link involves residue lysine 633. Residue lysine 633 is modified to N6-acetyllysine; alternate. Residue lysine 636 forms a Glycyl lysine isopeptide (Lys-Gly) (interchain with G-Cter in ubiquitin) linkage.

Belongs to the AAA ATPase family. RarA/MGS1/WRNIP1 subfamily. Forms homooligomers, possibly octamers. Directly interacts with POLD1, POLD2 and POLD4. Interacts with the N-terminal domain of WRN. Interacts (via UBZ4-type zinc finger) with monoubiquitin and polyubiquitin. Interacts with TRIM14 and PPP6C; these interactions positively regulate the RIGI signaling pathway. Post-translationally, sumoylated with SUMO1 and SUMO2/3. Ubiquitously expressed.

The protein resides in the nucleus. The protein localises to the cytoplasm. It carries out the reaction ATP + H2O = ADP + phosphate + H(+). Its function is as follows. Functions as a modulator of initiation or reinitiation events during DNA polymerase delta-mediated DNA synthesis. In the presence of ATP, stimulation of DNA polymerase delta-mediated DNA synthesis is decreased. Also plays a role in the innate immune defense against viruses. Stabilizes the RIGI dsRNA interaction and promotes RIGI 'Lys-63'-linked polyubiquitination. In turn, RIGI transmits the signal through mitochondrial MAVS. The protein is ATPase WRNIP1 of Homo sapiens (Human).